Consider the following 40-residue polypeptide: Bacterioferritin heavy chain (40 aa).

The region spanning 1 to 40 (MRGNPEVIDYLNMLIGGELAARDQYLIHSRMYEDWGLTKY) is the Ferritin-like diiron domain. Glu-18 contributes to the Fe cation binding site.

The protein belongs to the bacterioferritin family. As to quaternary structure, oligomer consisting of two types of subunits: light chain and heavy chain.

In terms of biological role, may perform analogous functions in iron detoxification and storage to that of animal ferritins. Contains approximately 750 iron atoms per molecule. This Absidia spinosa protein is Bacterioferritin heavy chain.